The following is a 409-amino-acid chain: uncharacterized protein (409 aa).

His46 provides a ligand contact to Zn(2+). Glu49 functions as the Proton acceptor in the catalytic mechanism. Positions 50 and 126 each coordinate Zn(2+).

Belongs to the peptidase M16 family. The cofactor is Zn(2+).

This is an uncharacterized protein from Bacillus subtilis (strain 168).